The following is a 356-amino-acid chain: 3-deoxy-alpha-D-manno-octulosonate 8-oxidase (356 aa).

The protein belongs to the iron-containing alcohol dehydrogenase family. The cofactor is a divalent metal cation.

The enzyme catalyses 3-deoxy-alpha-D-manno-oct-2-ulosonate + O2 = 3,8-dideoxy-8-oxo-alpha-D-manno-octulosonate + H2O2. It functions in the pathway bacterial outer membrane biogenesis; lipopolysaccharide biosynthesis. Its activity is regulated as follows. Inhibited by EDTA. Catalyzes the first step of the biosynthesis of Kdo8N (8-amino-3,8-dideoxy-D-manno-octulosonate) from Kdo (3-deoxy-D-manno-octulosonate). In Shewanella oneidensis (strain ATCC 700550 / JCM 31522 / CIP 106686 / LMG 19005 / NCIMB 14063 / MR-1), this protein is 3-deoxy-alpha-D-manno-octulosonate 8-oxidase.